We begin with the raw amino-acid sequence, 214 residues long: Proteasome subunit beta type-6 (214 aa).

Positions 1-14 (MEAPEWLDNAVDLG) are cleaved as a propeptide — removed in mature form. The active-site Nucleophile is Thr-15.

Belongs to the peptidase T1B family. The 26S proteasome consists of a 20S proteasome core and two 19S regulatory subunits. The 20S proteasome core is composed of 28 subunits that are arranged in four stacked rings, resulting in a barrel-shaped structure. The two end rings are each formed by seven alpha subunits, and the two central rings are each formed by seven beta subunits. The catalytic chamber with the active sites is on the inside of the barrel.

The protein resides in the cytoplasm. The protein localises to the nucleus. The enzyme catalyses Cleavage of peptide bonds with very broad specificity.. Its function is as follows. The proteasome is a multicatalytic proteinase complex which is characterized by its ability to cleave peptides with Arg, Phe, Tyr, Leu, and Glu adjacent to the leaving group at neutral or slightly basic pH. The proteasome has an ATP-dependent proteolytic activity. The chain is Proteasome subunit beta type-6 (psmB6) from Dictyostelium discoideum (Social amoeba).